The primary structure comprises 471 residues: uncharacterized protein (471 aa).

The next 12 membrane-spanning stretches (helical) occupy residues 48–68 (FISAALMLLNNTILCISFTIV), 85–105 (LSGVIIGLPTITALVLLYPML), 123–140 (YTMSCISCIIGHIMYALA), 145–165 (SVALILVSRIFTGVACTMFLY), 186–206 (VVNSVMATLGLTAGPFIGGLM), 223–243 (SGNWLMAFIWVGLFLFGFACF), 277–297 (FVGCLVIFVVAFSGFSAYFLL), 320–340 (GNFLSLAGIINVPLLLIFSYL), 349–369 (IILLGCCLNIVCMVIHITIHY), 379–399 (FIIYTLVFFGSSIANSPSVSL), 414–434 (VAVQISISLSDTVGAIFGGAF), and 440–460 (VVFFAVCLILNVMSVLALLII).

This sequence belongs to the major facilitator superfamily.

Its subcellular location is the golgi apparatus. The protein localises to the membrane. This is an uncharacterized protein from Schizosaccharomyces pombe (strain 972 / ATCC 24843) (Fission yeast).